The primary structure comprises 570 residues: Phytoene desaturase (570 aa).

A helical transmembrane segment spans residues 547 to 567 (LFQGFLGALVAILLAYYYLVI).

It belongs to the carotenoid/retinoid oxidoreductase family. NAD(+) is required as a cofactor.

It is found in the membrane. The catalysed reaction is 15-cis-phytoene + A = all-trans-phytofluene + AH2. The enzyme catalyses all-trans-phytofluene + A = all-trans-zeta-carotene + AH2. It carries out the reaction all-trans-zeta-carotene + A = all-trans-neurosporene + AH2. It catalyses the reaction all-trans-neurosporene + A = all-trans-lycopene + AH2. Its pathway is carotenoid biosynthesis. In terms of biological role, phytoene desaturase; part of the car gene cluster that mediates the biosynthesis of neurosporaxanthin, a carboxylic apocarotenoid acting as an essential protective pigments and leading to orange pigmentation. Converts phytoene into lycopene via the intermediates phytofluene, zeta-carotene and neurosporene; and further desaturates gamma-carotene into torulene. Neurosporaxanthin is synthesized from geranyl-geranyl pyrophosphate (GGPP) through several enzymatic activities. Phytoene synthase activity performed by the bifunctional enzyme carAR first produces phytoene from geranyl-geranyl pyrophosphate (GGPP). The phytoene dehydrogenase carB then introduces 4 desaturations to lead to lycopene which is substrate of the carotene cyclase activity of carAR that leads to the production of gamma-carotene. CarB then performs a 5th desaturation reaction to yield torulene. Torulene is the substrate of the dioxidase carT that breaks the molecule, removing five carbon atoms to yield beta-apo-4'-carotenal, whereas the aldehyde dehydrogenase carD mediates the last step by converting beta-apo-4'-carotenal into neurosporaxanthin. This is Phytoene desaturase from Fusarium fujikuroi (Bakanae and foot rot disease fungus).